Consider the following 450-residue polypeptide: E3 ubiquitin-protein ligase XB3 (450 aa).

ANK repeat units follow at residues 11–40 (GDEH…SLAR), 46–75 (DRLS…PPDA), 79–108 (HKQT…NILM), 113–142 (HART…TTPV), 158–187 (HGAT…IVSA), and 195–225 (PGST…RLQR). The disordered stretch occupies residues 291–312 (ILNGTKYSLPSPSPGDDSADDD). The segment at 323–372 (CCICFDQACTIEVQDCGHQMCAPCTLALCCHNKPNPTTLTPPSPACPFCR) adopts an RING-type zinc-finger fold. The disordered stretch occupies residues 385 to 450 (SACDPDKPSS…SNLDKPEHDL (66 aa)).

As to quaternary structure, interacts (via ankyrin repeats) with XA21. Phosphorylated by XA21.

It catalyses the reaction S-ubiquitinyl-[E2 ubiquitin-conjugating enzyme]-L-cysteine + [acceptor protein]-L-lysine = [E2 ubiquitin-conjugating enzyme]-L-cysteine + N(6)-ubiquitinyl-[acceptor protein]-L-lysine.. It functions in the pathway protein modification; protein ubiquitination. Its function is as follows. E3 ubiquitin-protein ligase required for full accumulation of the LRR receptor kinase XA21 and XA21-mediated disease resistance. Binding to XA21 may stabilize the receptor kinase and maintain its protein level. Autoubiquitinated in vitro. The sequence is that of E3 ubiquitin-protein ligase XB3 (XB3) from Oryza sativa subsp. japonica (Rice).